The sequence spans 354 residues: Ubiquitin-conjugating enzyme E2 Z (354 aa).

Residues 1 to 21 (MAESPTEEAATAGAGAAGPGA) form a disordered region. A UBC core domain is found at 99 to 253 (QCLLRIKRDI…IRHETIRVAV (155 aa)). Residue C188 is the Glycyl thioester intermediate of the active site. The interval 332–354 (NAEMDSDSSSSGTETDLHGSLRV) is disordered. S337 is modified (phosphoserine).

This sequence belongs to the ubiquitin-conjugating enzyme family. As to expression, widely expressed. Highly in placenta, pancreas, spleen and testis.

The protein localises to the cytoplasm. It is found in the nucleus. The enzyme catalyses S-ubiquitinyl-[E1 ubiquitin-activating enzyme]-L-cysteine + [E2 ubiquitin-conjugating enzyme]-L-cysteine = [E1 ubiquitin-activating enzyme]-L-cysteine + S-ubiquitinyl-[E2 ubiquitin-conjugating enzyme]-L-cysteine.. Its pathway is protein modification; protein ubiquitination. Catalyzes the covalent attachment of ubiquitin to other proteins. Specific substrate for UBA6, not charged with ubiquitin by UBE1. May be involved in apoptosis regulation. The sequence is that of Ubiquitin-conjugating enzyme E2 Z (UBE2Z) from Homo sapiens (Human).